The sequence spans 236 residues: Cancer/testis antigen 55 (236 aa).

A disordered region spans residues 57–84 (RSSADVETGDNPLKAEPNLPAAVEEQSP).

As to quaternary structure, interacts with GABARAP; this interaction may be important for GABARAP protein stability. Interacts with LAMP2; this interaction may be important for LAMP2 protein stability. In terms of tissue distribution, expressed in spermatozoa (at protein level).

It is found in the cytoplasm. It localises to the cytoplasmic vesicle. The protein localises to the secretory vesicle. The protein resides in the acrosome. Its subcellular location is the cell projection. It is found in the cilium. It localises to the flagellum. Plays a role in spermatogenesis, possibly acting in the regulation of the autophagy pathway. The polypeptide is Cancer/testis antigen 55 (Ct55) (Mus musculus (Mouse)).